We begin with the raw amino-acid sequence, 43 residues long: Potassium channel toxin gamma-KTx 4.1 (43 aa).

4 disulfides stabilise this stretch: Cys-5–Cys-23, Cys-11–Cys-34, Cys-20–Cys-39, and Cys-24–Cys-41.

The protein belongs to the ergtoxin family. Gamma-KTx 4 subfamily. In terms of tissue distribution, expressed by the venom gland.

The protein localises to the secreted. Its function is as follows. Reversibly blocks Kv11/ERG potassium channels. This is Potassium channel toxin gamma-KTx 4.1 from Centruroides limpidus (Mexican scorpion).